Consider the following 292-residue polypeptide: Homoserine kinase (292 aa).

Residue 84–94 (PLARGMGSSSA) participates in ATP binding.

The protein belongs to the GHMP kinase family. Homoserine kinase subfamily.

It localises to the cytoplasm. The enzyme catalyses L-homoserine + ATP = O-phospho-L-homoserine + ADP + H(+). Its pathway is amino-acid biosynthesis; L-threonine biosynthesis; L-threonine from L-aspartate: step 4/5. In terms of biological role, catalyzes the ATP-dependent phosphorylation of L-homoserine to L-homoserine phosphate. This chain is Homoserine kinase, found in Thermus thermophilus (strain ATCC 27634 / DSM 579 / HB8).